Here is a 103-residue protein sequence, read N- to C-terminus: Large ribosomal subunit protein eL21 (103 aa).

The protein belongs to the eukaryotic ribosomal protein eL21 family.

The sequence is that of Large ribosomal subunit protein eL21 from Sulfurisphaera tokodaii (strain DSM 16993 / JCM 10545 / NBRC 100140 / 7) (Sulfolobus tokodaii).